The chain runs to 458 residues: Glutamyl-tRNA(Gln) amidotransferase subunit D (458 aa).

One can recognise an Asparaginase/glutaminase domain in the interval 97–434; the sequence is PNVSVMSTGG…KEVERLMRTN (338 aa). Active-site residues include T107, T185, D186, and K264.

This sequence belongs to the asparaginase 1 family. GatD subfamily. As to quaternary structure, heterodimer of GatD and GatE.

It catalyses the reaction L-glutamyl-tRNA(Gln) + L-glutamine + ATP + H2O = L-glutaminyl-tRNA(Gln) + L-glutamate + ADP + phosphate + H(+). Functionally, allows the formation of correctly charged Gln-tRNA(Gln) through the transamidation of misacylated Glu-tRNA(Gln) in organisms which lack glutaminyl-tRNA synthetase. The reaction takes place in the presence of glutamine and ATP through an activated gamma-phospho-Glu-tRNA(Gln). The GatDE system is specific for glutamate and does not act on aspartate. The chain is Glutamyl-tRNA(Gln) amidotransferase subunit D from Methanopyrus kandleri (strain AV19 / DSM 6324 / JCM 9639 / NBRC 100938).